The sequence spans 155 residues: Ribonuclease H (155 aa).

Residues 9 to 150 (DGQQVEMWTD…ADALANQGVE (142 aa)) enclose the RNase H type-1 domain. Mg(2+) contacts are provided by Asp-18, Glu-56, Asp-78, and Asp-142.

The protein belongs to the RNase H family. In terms of assembly, monomer. Requires Mg(2+) as cofactor.

Its subcellular location is the cytoplasm. It catalyses the reaction Endonucleolytic cleavage to 5'-phosphomonoester.. Functionally, endonuclease that specifically degrades the RNA of RNA-DNA hybrids. The sequence is that of Ribonuclease H from Bordetella bronchiseptica (strain ATCC BAA-588 / NCTC 13252 / RB50) (Alcaligenes bronchisepticus).